The primary structure comprises 998 residues: Calcium-transporting ATPase 3, endoplasmic reticulum-type (998 aa).

Topologically, residues 1 to 48 (MEDAYARSVSEVLDFFGVDPTKGLSDSQVVHHSRLYGRNVLPEEKRTP) are cytoplasmic. Residues 49–69 (FWKLVLKQFDDLLVKILIVAA) traverse the membrane as a helical segment. At 70–89 (IVSFVLALANGETGLTAFLE) the chain is on the lumenal side. A helical transmembrane segment spans residues 90-109 (PFVILLILAANAAVGVITET). Over 110 to 250 (NAEKALEELR…DEATPLKKKL (141 aa)) the chain is Cytoplasmic. The helical transmembrane segment at 251 to 270 (DEFGSFLAKVIAGICVLVWV) threads the bilayer. The Lumenal portion of the chain corresponds to 271-291 (VNIGHFSDPSHGGFFKGAIHY). Residues 292 to 309 (FKIAVALAVAAIPEGLPA) traverse the membrane as a helical segment. 4 residues coordinate Ca(2+): valine 300, alanine 301, isoleucine 303, and glutamate 305. Over 310–746 (VVTTCLALGT…AEGRAIYNNT (437 aa)) the chain is Cytoplasmic. Residue aspartate 347 is the 4-aspartylphosphate intermediate of the active site. Mg(2+)-binding residues include aspartate 692 and aspartate 696. The chain crosses the membrane as a helical span at residues 747–766 (KQFIRYMISSNIGEVVCIFV). Ca(2+) contacts are provided by asparagine 757 and glutamate 760. The Lumenal segment spans residues 767–776 (AAVLGIPDTL). A helical membrane pass occupies residues 777 to 797 (APVQLLWVNLVTDGLPATAIG). Asparagine 785, threonine 788, and aspartate 789 together coordinate Ca(2+). Residues 798–817 (FNKQDSDVMKAKPRKVGEAV) are Cytoplasmic-facing. Residues 818-840 (VTGWLFFRYLVIGVYVGLATVAG) form a helical membrane-spanning segment. Topologically, residues 841–883 (FIWWFVYSDGGPKLTYSELMNFETCALRETTYPCSIFEDRHPS) are lumenal. A helical transmembrane segment spans residues 884 to 903 (TVAMTVLVVVEMFNALNNLS). Glutamate 894 serves as a coordination point for Ca(2+). Over 904–916 (ENQSLLVITPRSN) the chain is Cytoplasmic. The chain crosses the membrane as a helical span at residues 917-935 (LWLVGSIILTMLLHVLILY). Residues 936-950 (VHPLAVLFSVTPLSW) are Lumenal-facing. The helical transmembrane segment at 951-971 (AEWTAVLYLSFPVIIIDELLK) threads the bilayer. At 972 to 998 (FLSRNTGMRFRFRLRKADLLPKDRRDK) the chain is on the cytoplasmic side.

Belongs to the cation transport ATPase (P-type) (TC 3.A.3) family. Type IIA subfamily. In terms of tissue distribution, expressed in root cap, in elongation and differentiation zones of roots, in vascular tissues of roots, leaves, floral pedicels and style, in leaves, including hydathodes and guard cells, in stamens, in petals, in sepals and in siliques.

The protein localises to the golgi apparatus membrane. It is found in the endosome membrane. Its subcellular location is the prevacuolar compartment membrane. The enzyme catalyses Ca(2+)(in) + ATP + H2O = Ca(2+)(out) + ADP + phosphate + H(+). This magnesium-dependent enzyme catalyzes the hydrolysis of ATP coupled with the translocation of calcium from the cytosol to an endomembrane compartment. Involved in calcium-enhanced root growth, in tolerance to toxic levels of manganese and in secretory processes. Has a crucial role in manganese nutrition, but is not involved in transporting copper, iron or zinc. The sequence is that of Calcium-transporting ATPase 3, endoplasmic reticulum-type from Arabidopsis thaliana (Mouse-ear cress).